Reading from the N-terminus, the 253-residue chain is Sulfate transporter CysZ (253 aa).

Transmembrane regions (helical) follow at residues 31–51 (FVIL…WWLF), 75–95 (LLWP…FSTI), 151–171 (IVLL…PVLW), and 222–242 (IPVL…AMWV).

This sequence belongs to the CysZ family.

It is found in the cell inner membrane. High affinity, high specificity proton-dependent sulfate transporter, which mediates sulfate uptake. Provides the sulfur source for the cysteine synthesis pathway. This chain is Sulfate transporter CysZ, found in Citrobacter koseri (strain ATCC BAA-895 / CDC 4225-83 / SGSC4696).